The following is a 35-amino-acid chain: N-acylglucosamine 2-epimerase (35 aa).

A leucine-zipper region spans residues 1–21; it reads LNLVDQLGEADEELAGTYAEL.

The protein belongs to the N-acylglucosamine 2-epimerase family. As to quaternary structure, homodimer. Forms a heterodimer with renin and inhibits its activity.

The catalysed reaction is an N-acyl-D-glucosamine = an N-acyl-D-mannosamine. Its pathway is amino-sugar metabolism; N-acetylneuraminate degradation. Functionally, catalyzes the interconversion of N-acetylglucosamine to N-acetylmannosamine. Involved in the N-glycolylneuraminic acid (Neu5Gc) degradation pathway. In Canis lupus familiaris (Dog), this protein is N-acylglucosamine 2-epimerase.